The sequence spans 679 residues: Glycine--tRNA ligase beta subunit (679 aa).

Belongs to the class-II aminoacyl-tRNA synthetase family. As to quaternary structure, tetramer of two alpha and two beta subunits.

The protein resides in the cytoplasm. The enzyme catalyses tRNA(Gly) + glycine + ATP = glycyl-tRNA(Gly) + AMP + diphosphate. This is Glycine--tRNA ligase beta subunit from Streptococcus pyogenes serotype M4 (strain MGAS10750).